The chain runs to 200 residues: Snake venom serine protease VaSP1 (200 aa).

In terms of domain architecture, Peptidase S1 spans 1-200; sequence VIGGDECNIN…EIQGIVSYGK (200 aa). Residues aspartate 88 and serine 182 each act as charge relay system in the active site.

In terms of assembly, monomer. Post-translationally, N-glycosylated. The protein exist in multiple isoforms. In terms of tissue distribution, expressed by the venom gland.

It is found in the secreted. Inhibited by Pefabloc (90% inhibition), DTT (90%), Zn(2+) (80%), trypsin inhibitor II (50%), and benzamidine (45%), but not inhibited by EDTA, Ca(2+), Mg(2+) and L-Cys. Its function is as follows. Snake venom serine protease active on several blood coagulation enzymes. It completely cleaves fibrinogen Aalpha chain (FGA) after 120 minutes, partially cleaves Bbeta chain (FGB) (overnight) and has no activity on gamma chain. It does not release fibrinopeptides A and/or B exclusively, since the enzyme does not provoke fibrin polymerisation. It also degrades fibrin as efficiently as plasmin, and exhibits potent ability to cleave plasminogen and prothrombin, as well as heavy chain of factor X (F10). In vitro, it cleaves insulin B-chain (at positions His38-Leu39, Ala40-Leu41 and Tyr16-Leu17). This is Snake venom serine protease VaSP1 from Vipera ammodytes ammodytes (Western sand viper).